Reading from the N-terminus, the 365-residue chain is 3-isopropylmalate dehydrogenase (365 aa).

NAD(+) is bound at residue 80 to 93 (GPKWADNTGDQRPE). Residues Arg-100, Arg-110, Arg-138, and Asp-223 each contribute to the substrate site. 3 residues coordinate Mg(2+): Asp-223, Asp-247, and Asp-251. Residue 280–292 (GSAPDIAGQDVAN) coordinates NAD(+). The interval 337 to 365 (NEEDASTSAFGREVATRAADSVPQNAPTP) is disordered.

It belongs to the isocitrate and isopropylmalate dehydrogenases family. LeuB type 1 subfamily. Homodimer. Mg(2+) serves as cofactor. Requires Mn(2+) as cofactor.

It localises to the cytoplasm. It carries out the reaction (2R,3S)-3-isopropylmalate + NAD(+) = 4-methyl-2-oxopentanoate + CO2 + NADH. It participates in amino-acid biosynthesis; L-leucine biosynthesis; L-leucine from 3-methyl-2-oxobutanoate: step 3/4. Its function is as follows. Catalyzes the oxidation of 3-carboxy-2-hydroxy-4-methylpentanoate (3-isopropylmalate) to 3-carboxy-4-methyl-2-oxopentanoate. The product decarboxylates to 4-methyl-2 oxopentanoate. The sequence is that of 3-isopropylmalate dehydrogenase from Salinibacter ruber (strain DSM 13855 / M31).